Consider the following 364-residue polypeptide: MPLNKRFTLTQYLIQERRRFPDARGDFNALILDVALACKAIARAVAFGELGGMLGNHDADAGGSINVQGETQKKLDVISNQYFTRMNEWGGHLAGMASEEMDDAYQIPAEHPRGKYLLVFDPLDGSSNIDVNVSVGSIFSILRAPQEAVESGRDVVEADFFQPGAEQVAAGYALYGPTTMLVLSVGNGVAGFTLDPMLGEFMLTHDKLQVPENTQEFAINASNSRFWEPPVKRYVDECLAGKTGPRDKDFNMRWIASMVAEAHRILMRGGVFLYPRDSKDAAKPGRLRLLYEANPIGFIMEQAGGRASTGREPMLGVQPTSLHQRIGLIFGSKNEVERIERYHAEPARAEMHNPLFAERSLFRS.

Positions 99, 121, 123, and 124 each coordinate Mg(2+). Substrate is bound by residues 124–127 and N220; that span reads DGSS. Mg(2+) is bound at residue E292.

Belongs to the FBPase class 1 family. Homotetramer. Requires Mg(2+) as cofactor.

It is found in the cytoplasm. It carries out the reaction beta-D-fructose 1,6-bisphosphate + H2O = beta-D-fructose 6-phosphate + phosphate. The protein operates within carbohydrate biosynthesis; gluconeogenesis. This chain is Fructose-1,6-bisphosphatase class 1 2, found in Polaromonas naphthalenivorans (strain CJ2).